We begin with the raw amino-acid sequence, 78 residues long: D-alanyl carrier protein (78 aa).

One can recognise a Carrier domain in the interval 1–78 (MAFRENVLEI…MIITQLEALK (78 aa)). An O-(pantetheine 4'-phosphoryl)serine modification is found at Ser36.

It belongs to the DltC family. In terms of processing, 4'-phosphopantetheine is transferred from CoA to a specific serine of apo-DCP.

Its subcellular location is the cytoplasm. It participates in cell wall biogenesis; lipoteichoic acid biosynthesis. Carrier protein involved in the D-alanylation of lipoteichoic acid (LTA). The loading of thioester-linked D-alanine onto DltC is catalyzed by D-alanine--D-alanyl carrier protein ligase DltA. The DltC-carried D-alanyl group is further transferred to cell membrane phosphatidylglycerol (PG) by forming an ester bond, probably catalyzed by DltD. D-alanylation of LTA plays an important role in modulating the properties of the cell wall in Gram-positive bacteria, influencing the net charge of the cell wall. This Listeria welshimeri serovar 6b (strain ATCC 35897 / DSM 20650 / CCUG 15529 / CIP 8149 / NCTC 11857 / SLCC 5334 / V8) protein is D-alanyl carrier protein.